Reading from the N-terminus, the 448-residue chain is Mitochondrial distribution and morphology protein 10 (448 aa).

This sequence belongs to the MDM10 family. As to quaternary structure, component of the ER-mitochondria encounter structure (ERMES) or MDM complex, composed of MMM1, MDM10, MDM12 and MDM34. Associates with the mitochondrial outer membrane sorting assembly machinery SAM(core) complex.

Its subcellular location is the mitochondrion outer membrane. In terms of biological role, component of the ERMES/MDM complex, which serves as a molecular tether to connect the endoplasmic reticulum and mitochondria. Components of this complex are involved in the control of mitochondrial shape and protein biogenesis and may function in phospholipid exchange. MDM10 is involved in the late assembly steps of the general translocase of the mitochondrial outer membrane (TOM complex). Functions in the TOM40-specific route of the assembly of outer membrane beta-barrel proteins, including the association of TOM40 with the receptor TOM22 and small TOM proteins. Can associate with the SAM(core) complex as well as the MDM12-MMM1 complex, both involved in late steps of the major beta-barrel assembly pathway, that is responsible for biogenesis of all outer membrane beta-barrel proteins. May act as a switch that shuttles between both complexes and channels precursor proteins into the TOM40-specific pathway. Plays a role in mitochondrial morphology and in the inheritance of mitochondria. This is Mitochondrial distribution and morphology protein 10 from Podospora anserina (strain S / ATCC MYA-4624 / DSM 980 / FGSC 10383) (Pleurage anserina).